Here is a 474-residue protein sequence, read N- to C-terminus: Alkylcitrate dehydratase phiI (474 aa).

It belongs to the PrpD family. In terms of assembly, monomer.

The enzyme catalyses (4E,11E)-2-hydroxytrideca-4,11-dien-1,2,3-tricarboxylate + 2 H(+) = [4-(deca-1,8-diyl)-2,5-dioxo-2,5-dihydro-3-furanyl]acetate + 2 H2O. The protein operates within secondary metabolite biosynthesis. Alkylcitrate dehydratasee; part of the gene cluster that mediates the biosynthesis of the antihypercholesterolemic agents phomoidrides which are dimeric anhydrides. Within the pathway, the alkylcitrate synthase (ACS) tstiJ and the alkylcitrate dehydratase (ACDH) tstI produce the decarboxylated monomeric anhydrides by coupling the C12-fatty acyl product from phiA with oxalacetic acid. The pathway begins with the highly reducing polyketide synthase tstA that catalyzes the formation of a C12-fatty acyl-ACP, starting from one acetate and 5 malonate units. The hydrolase tstM is involved in the release of the C12-fatty acyl chain from phiA. The alkylcitrate synthase (ACS) tstJ and the alkylcitrate dehydratase (ACDH) tstI then give rise to decarboxylated monomeric anhydrides by coupling the C12-fatty acyl chain with oxalacetic acid. The cyclase tstC is responsible for the dimerization of the monomeric anhydrides which leads to the production of prephomoidride that contains the characteristic bicyclo[4.3.1]deca-1,6-diene system of phomoidrides. Iterative oxidation catalyzed by the alpha-ketoglutarate-dependent dioxygenase tstK produced then phomoidride A. Finally, the methyltransferase tstE converts phomoidride A to phomoidride B via an acetalization reaction. The phosphatidylethanolamine-binding protein tstB and tstN are not essential for dimerization and their functions have still to be determined. This Talaromyces stipitatus (strain ATCC 10500 / CBS 375.48 / QM 6759 / NRRL 1006) (Penicillium stipitatum) protein is Alkylcitrate dehydratase phiI.